A 768-amino-acid polypeptide reads, in one-letter code: Putative calcium up-regulated protein H (768 aa).

Residues 1–22 (MINIEDISKSSNQSEEKQLKST) form a disordered region. Ricin B-type lectin domains are found at residues 25-145 (KPKY…WTTF) and 116-248 (QGNG…WGIN).

The protein belongs to the cup family.

The protein localises to the cytoplasm. It is found in the membrane. In terms of biological role, may play an important role in stabilizing and/or regulating the cell membrane during Ca(2+) stress or certain stages of development. This chain is Putative calcium up-regulated protein H (cupH), found in Dictyostelium discoideum (Social amoeba).